The following is a 254-amino-acid chain: Acetylglutamate kinase (254 aa).

Substrate is bound by residues 40 to 41, arginine 62, and asparagine 158; that span reads GG.

It belongs to the acetylglutamate kinase family. ArgB subfamily.

Its subcellular location is the cytoplasm. The catalysed reaction is N-acetyl-L-glutamate + ATP = N-acetyl-L-glutamyl 5-phosphate + ADP. Its pathway is amino-acid biosynthesis; L-arginine biosynthesis; N(2)-acetyl-L-ornithine from L-glutamate: step 2/4. Catalyzes the ATP-dependent phosphorylation of N-acetyl-L-glutamate. In Chloroflexus aggregans (strain MD-66 / DSM 9485), this protein is Acetylglutamate kinase.